The sequence spans 416 residues: Pigment epithelium-derived factor (416 aa).

An N-terminal signal peptide occupies residues 1-20 (MQALVLLLWTGALLGFGRCQ). Ser-112 and Ser-225 each carry phosphoserine. An N-linked (GlcNAc...) asparagine glycan is attached at Asn-283.

It belongs to the serpin family. As to quaternary structure, interacts with PNPLA2; this interaction stimulates the phospholipase A2 activity of PNPLA2. Retinal pigment epithelial cells. Located in the interphotoreceptor matrix (IPM) which is between the retinal pigment epithelium and the neural retina.

The protein resides in the secreted. Its subcellular location is the melanosome. Its function is as follows. Neurotrophic protein; induces extensive neuronal differentiation in retinoblastoma cells. Potent inhibitor of angiogenesis. As it does not undergo the S (stressed) to R (relaxed) conformational transition characteristic of active serpins, it exhibits no serine protease inhibitory activity. The sequence is that of Pigment epithelium-derived factor (SERPINF1) from Bos taurus (Bovine).